Consider the following 273-residue polypeptide: 5-deoxy-glucuronate isomerase (273 aa).

This sequence belongs to the isomerase IolB family.

The enzyme catalyses 5-deoxy-D-glucuronate = 5-dehydro-2-deoxy-D-gluconate. It participates in polyol metabolism; myo-inositol degradation into acetyl-CoA; acetyl-CoA from myo-inositol: step 4/7. In terms of biological role, involved in the isomerization of 5-deoxy-glucuronate (5DG) to 5-dehydro-2-deoxy-D-gluconate (DKG or 2-deoxy-5-keto-D-gluconate). The polypeptide is 5-deoxy-glucuronate isomerase (Listeria monocytogenes serotype 4a (strain HCC23)).